We begin with the raw amino-acid sequence, 328 residues long: Malate dehydrogenase (328 aa).

12–18 lines the NAD(+) pocket; that stretch reads GAAGQIG. Arg93 and Arg99 together coordinate substrate. NAD(+) contacts are provided by residues Asn106, Gln113, and 130-132; that span reads TGN. Substrate is bound by residues Asn132 and Arg163. The Proton acceptor role is filled by His188.

It belongs to the LDH/MDH superfamily. MDH type 2 family.

The catalysed reaction is (S)-malate + NAD(+) = oxaloacetate + NADH + H(+). Functionally, catalyzes the reversible oxidation of malate to oxaloacetate. The chain is Malate dehydrogenase from Kocuria rhizophila (strain ATCC 9341 / DSM 348 / NBRC 103217 / DC2201).